A 250-amino-acid chain; its full sequence is tRNA (guanine-N(7)-)-methyltransferase (250 aa).

S-adenosyl-L-methionine contacts are provided by Glu79, Glu104, Asp131, and Asp154. Asp154 is a catalytic residue. Substrate contacts are provided by residues Lys158, Asp190, and 228 to 231 (TKFE).

Belongs to the class I-like SAM-binding methyltransferase superfamily. TrmB family.

It carries out the reaction guanosine(46) in tRNA + S-adenosyl-L-methionine = N(7)-methylguanosine(46) in tRNA + S-adenosyl-L-homocysteine. The protein operates within tRNA modification; N(7)-methylguanine-tRNA biosynthesis. Functionally, catalyzes the formation of N(7)-methylguanine at position 46 (m7G46) in tRNA. The protein is tRNA (guanine-N(7)-)-methyltransferase of Actinobacillus pleuropneumoniae serotype 5b (strain L20).